Here is a 311-residue protein sequence, read N- to C-terminus: Small ribosomal subunit biogenesis GTPase RsgA (311 aa).

A CP-type G domain is found at 88–246; that stretch reads SKEKEQVIVA…VIDTPGIREF (159 aa). Residues 137–140 and 188–196 contribute to the GTP site; these read NKID and GHSGVGKST. Residues Cys-270, Cys-275, His-277, and Cys-283 each contribute to the Zn(2+) site.

It belongs to the TRAFAC class YlqF/YawG GTPase family. RsgA subfamily. Monomer. Associates with 30S ribosomal subunit, binds 16S rRNA. Zn(2+) is required as a cofactor.

The protein localises to the cytoplasm. One of several proteins that assist in the late maturation steps of the functional core of the 30S ribosomal subunit. Helps release RbfA from mature subunits. May play a role in the assembly of ribosomal proteins into the subunit. Circularly permuted GTPase that catalyzes slow GTP hydrolysis, GTPase activity is stimulated by the 30S ribosomal subunit. This Chlorobaculum tepidum (strain ATCC 49652 / DSM 12025 / NBRC 103806 / TLS) (Chlorobium tepidum) protein is Small ribosomal subunit biogenesis GTPase RsgA.